The primary structure comprises 429 residues: Adenylosuccinate synthetase (429 aa).

Residues 12–18 (GDEGKGK) and 40–42 (GHT) contribute to the GTP site. The Proton acceptor role is filled by aspartate 13. Mg(2+) is bound by residues aspartate 13 and glycine 40. Residues 13–16 (DEGK), 38–41 (NAGH), threonine 129, arginine 143, glutamine 223, threonine 238, and arginine 302 each bind IMP. Residue histidine 41 is the Proton donor of the active site. 298-304 (VVTGRKR) provides a ligand contact to substrate. GTP contacts are provided by residues arginine 304, 330-332 (KLD), and 412-414 (STS).

Belongs to the adenylosuccinate synthetase family. Homodimer. It depends on Mg(2+) as a cofactor.

Its subcellular location is the cytoplasm. The enzyme catalyses IMP + L-aspartate + GTP = N(6)-(1,2-dicarboxyethyl)-AMP + GDP + phosphate + 2 H(+). It functions in the pathway purine metabolism; AMP biosynthesis via de novo pathway; AMP from IMP: step 1/2. Its function is as follows. Plays an important role in the de novo pathway of purine nucleotide biosynthesis. Catalyzes the first committed step in the biosynthesis of AMP from IMP. The chain is Adenylosuccinate synthetase from Maricaulis maris (strain MCS10) (Caulobacter maris).